Reading from the N-terminus, the 238-residue chain is Aspartate/glutamate leucyltransferase (238 aa).

Belongs to the R-transferase family. Bpt subfamily.

The protein localises to the cytoplasm. The catalysed reaction is N-terminal L-glutamyl-[protein] + L-leucyl-tRNA(Leu) = N-terminal L-leucyl-L-glutamyl-[protein] + tRNA(Leu) + H(+). It carries out the reaction N-terminal L-aspartyl-[protein] + L-leucyl-tRNA(Leu) = N-terminal L-leucyl-L-aspartyl-[protein] + tRNA(Leu) + H(+). Its function is as follows. Functions in the N-end rule pathway of protein degradation where it conjugates Leu from its aminoacyl-tRNA to the N-termini of proteins containing an N-terminal aspartate or glutamate. The sequence is that of Aspartate/glutamate leucyltransferase from Nitrosococcus oceani (strain ATCC 19707 / BCRC 17464 / JCM 30415 / NCIMB 11848 / C-107).